Here is a 378-residue protein sequence, read N- to C-terminus: Ribosomal RNA large subunit methyltransferase G (378 aa).

This sequence belongs to the methyltransferase superfamily. RlmG family.

It is found in the cytoplasm. The catalysed reaction is guanosine(1835) in 23S rRNA + S-adenosyl-L-methionine = N(2)-methylguanosine(1835) in 23S rRNA + S-adenosyl-L-homocysteine + H(+). Its function is as follows. Specifically methylates the guanine in position 1835 (m2G1835) of 23S rRNA. The protein is Ribosomal RNA large subunit methyltransferase G of Salmonella paratyphi A (strain ATCC 9150 / SARB42).